The following is a 457-amino-acid chain: Bifunctional protein GlmU (457 aa).

The tract at residues 1–229 (MYNCAIILAA…YEEIMGVNSR (229 aa)) is pyrophosphorylase. UDP-N-acetyl-alpha-D-glucosamine contacts are provided by residues 8 to 11 (LAAG), Lys-22, Gln-73, and 78 to 79 (GT). Asp-103 serves as a coordination point for Mg(2+). Residues Gly-140, Glu-155, Asn-170, and Asn-227 each coordinate UDP-N-acetyl-alpha-D-glucosamine. Asn-227 is a binding site for Mg(2+). Residues 230-250 (VQLSEAEIVMRKRINHKHMVN) form a linker region. Residues 251-457 (GVTFIDCEST…WLDKKGLLKK (207 aa)) are N-acetyltransferase. Residues Arg-332 and Lys-350 each contribute to the UDP-N-acetyl-alpha-D-glucosamine site. His-362 (proton acceptor) is an active-site residue. UDP-N-acetyl-alpha-D-glucosamine is bound by residues Tyr-365 and Asn-376. Residues 385–386 (NY), Ala-422, and Arg-439 each bind acetyl-CoA.

It in the N-terminal section; belongs to the N-acetylglucosamine-1-phosphate uridyltransferase family. In the C-terminal section; belongs to the transferase hexapeptide repeat family. Homotrimer. The cofactor is Mg(2+).

The protein resides in the cytoplasm. The enzyme catalyses alpha-D-glucosamine 1-phosphate + acetyl-CoA = N-acetyl-alpha-D-glucosamine 1-phosphate + CoA + H(+). It carries out the reaction N-acetyl-alpha-D-glucosamine 1-phosphate + UTP + H(+) = UDP-N-acetyl-alpha-D-glucosamine + diphosphate. It functions in the pathway nucleotide-sugar biosynthesis; UDP-N-acetyl-alpha-D-glucosamine biosynthesis; N-acetyl-alpha-D-glucosamine 1-phosphate from alpha-D-glucosamine 6-phosphate (route II): step 2/2. It participates in nucleotide-sugar biosynthesis; UDP-N-acetyl-alpha-D-glucosamine biosynthesis; UDP-N-acetyl-alpha-D-glucosamine from N-acetyl-alpha-D-glucosamine 1-phosphate: step 1/1. The protein operates within bacterial outer membrane biogenesis; LPS lipid A biosynthesis. Catalyzes the last two sequential reactions in the de novo biosynthetic pathway for UDP-N-acetylglucosamine (UDP-GlcNAc). The C-terminal domain catalyzes the transfer of acetyl group from acetyl coenzyme A to glucosamine-1-phosphate (GlcN-1-P) to produce N-acetylglucosamine-1-phosphate (GlcNAc-1-P), which is converted into UDP-GlcNAc by the transfer of uridine 5-monophosphate (from uridine 5-triphosphate), a reaction catalyzed by the N-terminal domain. This is Bifunctional protein GlmU from Clostridium botulinum (strain Loch Maree / Type A3).